Reading from the N-terminus, the 211-residue chain is RNA chaperone ProQ (211 aa).

The segment at 112-148 is disordered; sequence ERRAVEKANNPKANKKRSVHHSGNKSENKKSAGKKFS. Residues 124-134 are compositionally biased toward basic residues; it reads ANKKRSVHHSG.

The protein belongs to the ProQ family.

The protein resides in the cytoplasm. RNA chaperone with significant RNA binding, RNA strand exchange and RNA duplexing activities. In Histophilus somni (strain 2336) (Haemophilus somnus), this protein is RNA chaperone ProQ.